The primary structure comprises 522 residues: Lysine--tRNA ligase (522 aa).

The 'HIGH' region motif lies at 44–52 (PSGLPHIGT). The 'KMSKS' region signature appears at 290–294 (KISKS). K293 is an ATP binding site.

Belongs to the class-I aminoacyl-tRNA synthetase family.

It is found in the cytoplasm. The catalysed reaction is tRNA(Lys) + L-lysine + ATP = L-lysyl-tRNA(Lys) + AMP + diphosphate. The sequence is that of Lysine--tRNA ligase from Rickettsia bellii (strain RML369-C).